The primary structure comprises 130 residues: Large ribosomal subunit protein bL21 (130 aa).

The protein belongs to the bacterial ribosomal protein bL21 family. As to quaternary structure, part of the 50S ribosomal subunit. Contacts protein L20.

In terms of biological role, this protein binds to 23S rRNA in the presence of protein L20. This Trichormus variabilis (strain ATCC 29413 / PCC 7937) (Anabaena variabilis) protein is Large ribosomal subunit protein bL21.